Consider the following 284-residue polypeptide: Ribose-phosphate pyrophosphokinase 1 (284 aa).

34 to 36 (DGE) contributes to the ATP binding site. His-126 and Asp-163 together coordinate Mg(2+). Lys-186 is a catalytic residue. D-ribose 5-phosphate-binding positions include Arg-188, Asp-211, and 215-219 (STGGT).

Belongs to the ribose-phosphate pyrophosphokinase family. Class III (archaeal) subfamily. The cofactor is Mg(2+).

The protein resides in the cytoplasm. It carries out the reaction D-ribose 5-phosphate + ATP = 5-phospho-alpha-D-ribose 1-diphosphate + AMP + H(+). It functions in the pathway metabolic intermediate biosynthesis; 5-phospho-alpha-D-ribose 1-diphosphate biosynthesis; 5-phospho-alpha-D-ribose 1-diphosphate from D-ribose 5-phosphate (route I): step 1/1. Its function is as follows. Involved in the biosynthesis of the central metabolite phospho-alpha-D-ribosyl-1-pyrophosphate (PRPP) via the transfer of pyrophosphoryl group from ATP to 1-hydroxyl of ribose-5-phosphate (Rib-5-P). This chain is Ribose-phosphate pyrophosphokinase 1, found in Archaeoglobus fulgidus (strain ATCC 49558 / DSM 4304 / JCM 9628 / NBRC 100126 / VC-16).